The following is a 155-amino-acid chain: Calmodulin, flagellar (155 aa).

4 consecutive EF-hand domains span residues 14–49 (EQIA…LGQN), 50–85 (PTEA…KMKD), 87–122 (DNEE…LGEK), and 123–155 (LTDE…MMQK). Ca(2+) contacts are provided by D27, D29, D31, T33, E38, D63, D65, N67, T69, E74, D100, D102, N104, E111, D136, D138, D140, Q142, and E147.

This sequence belongs to the calmodulin family.

The protein resides in the cell projection. The protein localises to the cilium. Its subcellular location is the flagellum. Functionally, calmodulin mediates the control of a large number of enzymes, ion channels and other proteins by Ca(2+). Among the enzymes to be stimulated by the calmodulin-Ca(2+) complex are a number of protein kinases and phosphatases. The protein is Calmodulin, flagellar (CAM1) of Naegleria gruberi (Amoeba).